The sequence spans 781 residues: MTKSYMPLFRSPRQFKKIYFILIPLILAVIILHVFFDGFNKISEYSPTFISNRILNHQDQQQKSEKSSDVISSYFPSLAIYPKNFDNRVEFVNEPKNSKWIQYFGDSKTVLSNYITNQTYTNHSIGLYSSSTVRPPASSCKDILYERSFEITKYRTLHDDLYKLATTLLYQLENDPAFQDLSPFFNDRLPHIIMRGELHKHIYKFAGTSVWLEQHGVHLMLSRVIYSQQGKKNDPQLSLLYAQVYDENWNELNDIELIVPVINPNGERVYDSVKYPQFLAIPFYHNSEYIKSRWYGPEDTRLILTKNKFGDDEPVIIFNSYHRQIKDMSTEDDNNVHTKFEFYRSMFVGWLFQYQLGKLNTDGIQDSKFNNVTFNKVKELRIEGKERTSIEKNWTPFIDPDERNQISYYGNHNLGDNYVYIVYQWNHLKILKCELDNFIDSSHSTCTMFFKDVETTQEVGPVRGGTELWPIKIDNNNNNNNLNEDDLSTKQEPQQQRQLWIGFLRAHVKDCGCGGSMYRPNFLILEKLNSKFKLTYLSGSINFNVSVYGWANYDVVCAGHEANALIPNGISMFDQDDDYLTLSMSVADQDNTLVHIHGVKKLIYSLDHDWNGILKENKQIECVVNNANDFCKAYADEHYKLGDSEAAIKEVKQKAKEEAEKAKAEKEKAEKEKAEKEKAEKEKEEKEKEEKEEKEKAEKEKEEKEKAEKELAEKELAEQKDEDAKDEDKNEDEDDKEKNDESGLTEKSEVEENGENTNEGGEDDGDGDGEEEKEDDDDIEV.

Residues 1-17 lie on the Cytoplasmic side of the membrane; the sequence is MTKSYMPLFRSPRQFKK. Residues 18 to 38 traverse the membrane as a helical segment; it reads IYFILIPLILAVIILHVFFDG. Over 39 to 781 the chain is Extracellular; that stretch reads FNKISEYSPT…EKEDDDDIEV (743 aa). Residues 640-733 adopt a coiled-coil conformation; it reads KLGDSEAAIK…AKDEDKNEDE (94 aa). Composition is skewed to basic and acidic residues over residues 663–728 and 736–750; these read KAEK…KDED and KEKN…KSEV. The interval 663–781 is disordered; the sequence is KAEKEKAEKE…EKEDDDDIEV (119 aa). A compositionally biased stretch (acidic residues) spans 751-781; the sequence is EENGENTNEGGEDDGDGDGEEEKEDDDDIEV.

Belongs to the BMT family.

The protein localises to the membrane. Beta-mannosyltransferase involved in cell wall biosynthesis. Required for the elongation of beta-mannose chains on the acid-labile fraction of cell wall phosphopeptidomannan. The sequence is that of Beta-mannosyltransferase 4 (BMT4) from Candida albicans (strain SC5314 / ATCC MYA-2876) (Yeast).